Consider the following 474-residue polypeptide: Cyclin-dependent kinase 2 homolog (474 aa).

Residues 7 to 446 (YRHVVKLGEG…AAEAVHHPYL (440 aa)) form the Protein kinase domain. Residues 13 to 21 (LGEGTYGMV) and lysine 36 contribute to the ATP site. Threonine 17 is modified (phosphothreonine). A Phosphotyrosine modification is found at tyrosine 18. Residue aspartate 131 is the Proton acceptor of the active site. Residues 150–200 (TALPSSPQQSMRVPHAGGTNGEAGRASANGNEHAPRPTAAEGSVSPWEEAA) form a disordered region. Serine 230 bears the Phosphoserine mark. Positions 334 to 354 (QQLQAQQQQPQQGSSPSHSSS) are enriched in low complexity. Residues 334 to 356 (QQLQAQQQQPQQGSSPSHSSSRA) are disordered.

It belongs to the protein kinase superfamily. CMGC Ser/Thr protein kinase family. CDC2/CDKX subfamily. As to quaternary structure, may form a complex composed of at least the catalytic subunit CRK2 and a cyclin. Mg(2+) is required as a cofactor.

The protein resides in the cytoplasm. It catalyses the reaction L-seryl-[protein] + ATP = O-phospho-L-seryl-[protein] + ADP + H(+). The enzyme catalyses L-threonyl-[protein] + ATP = O-phospho-L-threonyl-[protein] + ADP + H(+). It carries out the reaction [DNA-directed RNA polymerase] + ATP = phospho-[DNA-directed RNA polymerase] + ADP + H(+). Its activity is regulated as follows. Phosphorylation at Thr-17 or Tyr-18 inactivates the enzyme, while phosphorylation at Ser-230 activates it. Functionally, serine/threonine-protein kinase. Involved in the control of the cell cycle. Required for entry into S-phase and mitosis. Probable component of the kinase complex that phosphorylates the repetitive C-terminus of RNA polymerase II. The sequence is that of Cyclin-dependent kinase 2 homolog from Crithidia fasciculata.